The sequence spans 348 residues: Ileal sodium/bile acid cotransporter (348 aa).

The Extracellular segment spans residues 1-28; it reads MDNSSICNPNATICEGDSCIAPESNFNA. N-linked (GlcNAc...) asparagine glycans are attached at residues Asn-3 and Asn-10. The helical transmembrane segment at 29–49 threads the bilayer; that stretch reads ILSVVMSTVLTILLALVMFSM. Residues 50–81 are Cytoplasmic-facing; the sequence is GCNVELHKFLGHLRRPWGIVVGFLCQFGIMPL. The chain crosses the membrane as a helical span at residues 82–102; the sequence is TGFVLSVAFGILPVQAVVVLI. At 103–126 the chain is on the extracellular side; the sequence is QGCCPGGTASNILAYWVDGDMDLS. The chain crosses the membrane as a helical span at residues 127–147; sequence VSMTTCSTLLALGMMPLCLFI. Over 148–157 the chain is Cytoplasmic; the sequence is YTKMWVDSGT. Residues 158 to 178 form a helical membrane-spanning segment; sequence IVIPYDSIGTSLVALVIPVSI. The Extracellular segment spans residues 179–195; the sequence is GMYVNHKWPQKAKIILK. The chain crosses the membrane as a helical span at residues 196–216; it reads IGSIAGAILIVLIAVVGGILY. Over 217 to 224 the chain is Cytoplasmic; it reads QSAWTIEP. Residues 225-245 form a helical membrane-spanning segment; sequence KLWIIGTIYPIAGYGLGFFLA. Residues 246–284 lie on the Extracellular side of the membrane; sequence RIAGQPWYRCRTVALETGLQNTQLCSTIVQLSFSPEDLN. The chain crosses the membrane as a helical span at residues 285 to 305; sequence LVFTFPLIYSIFQIAFAAILL. Residues 306 to 348 are Cytoplasmic-facing; sequence GAYVAYKKCHGKNNTELQEKTDNEMEPRSSFQETNKGFQPDEK. The segment covering 322-332 has biased composition (basic and acidic residues); sequence LQEKTDNEMEP. The disordered stretch occupies residues 322–348; that stretch reads LQEKTDNEMEPRSSFQETNKGFQPDEK. Ser-335 carries the post-translational modification Phosphoserine.

This sequence belongs to the bile acid:sodium symporter (BASS) (TC 2.A.28) family. In terms of assembly, monomer and homodimer. In terms of tissue distribution, mainly expressed in ileum and kidney, lower expression in jejunum.

Its subcellular location is the membrane. It catalyses the reaction taurocholate(out) + 2 Na(+)(out) = taurocholate(in) + 2 Na(+)(in). It carries out the reaction cholate(out) + 2 Na(+)(out) = cholate(in) + 2 Na(+)(in). The enzyme catalyses taurochenodeoxycholate(out) + 2 Na(+)(out) = taurochenodeoxycholate(in) + 2 Na(+)(in). The catalysed reaction is tauroursodeoxycholate(out) + 2 Na(+)(out) = tauroursodeoxycholate(in) + 2 Na(+)(in). It catalyses the reaction glycocholate(out) + 2 Na(+)(out) = glycocholate(in) + 2 Na(+)(in). It carries out the reaction tauronorcholate(out) + 2 Na(+)(out) = tauronorcholate(in) + 2 Na(+)(in). The enzyme catalyses tauroallocholate(out) + 2 Na(+)(out) = tauroallocholate(in) + 2 Na(+)(in). The catalysed reaction is taurodeoxycholate(out) + 2 Na(+)(out) = taurodeoxycholate(in) + 2 Na(+)(in). It catalyses the reaction tauro-beta-muricholate(out) + 2 Na(+)(out) = tauro-beta-muricholate(in) + 2 Na(+)(in). Functionally, plays a critical role in the sodium-dependent reabsorption of bile acids from the lumen of the small intestine. Transports various bile acids, unconjugated or conjugated, such as cholate and taurocholate. Also responsible for bile acid transport in the renal proximal tubules, a salvage mechanism that helps conserve bile acids. Works collaboratively with the Na(+)-taurocholate cotransporting polypeptide (NTCP), the organic solute transporter (OST), and the bile salt export pump (BSEP), to ensure efficacious biological recycling of bile acids during enterohepatic circulation. The protein is Ileal sodium/bile acid cotransporter (SLC10A2) of Cricetulus griseus (Chinese hamster).